Reading from the N-terminus, the 140-residue chain is MNNEHRFEIEGLTYVMTPANAMAAWQSLKRAGVLLRGMDADALANAQGAASVALGTLLSHLGDPAVTEIEALVFEQTAIKTPEGTTYRLSPDRLNEHFNTRRTHLLRVLMEGVKYQYSDFFVGGMAAFQDLIPMPSAEQE.

This is an uncharacterized protein from Xylella fastidiosa (strain 9a5c).